The primary structure comprises 123 residues: Gamma-synuclein (123 aa).

Repeat copies occupy residues 20–30 and 31–41. Positions 20-67 are 4 X 11 AA tandem repeats of [EGSA]-K-T-K-[EQ]-[GQ]-V-X(4); that stretch reads EKTKQGVTEAAEKTKEGVMYVGTKTKENVVQSVTSVAEKTKEQANAVS. The stretch at 42-56 is one 3; approximate repeat; that stretch reads TKTKENVVQSVTSVA. Residues 57 to 67 form repeat 4; sequence EKTKEQANAVS. A phosphoserine mark is found at Ser-67 and Ser-72. The tract at residues 91-123 is disordered; that stretch reads TTGVVRKEDLEPPAQDQEAKEQEENEEAKSGED. Residues 107–123 are compositionally biased toward basic and acidic residues; it reads QEAKEQEENEEAKSGED. Ser-120 is modified (phosphoserine; by BARK1, CaMK2 and CK2).

It belongs to the synuclein family. In terms of assembly, may be a centrosome-associated protein. Interacts with MYOC; affects its secretion and its aggregation. Phosphorylated. Phosphorylation by GRK5 appears to occur on residues distinct from the residue phosphorylated by other kinases. As to expression, highly expressed in brain, particularly in the substantia nigra. Also expressed in the corpus callosum, heart, skeletal muscle, ovary, testis, colon and spleen. Weak expression in pancreas, kidney and lung. Expressed predominantly in the cell bodies and axons of primary sensory neurons, sympathetic neurons and motoneurons.

The protein localises to the cytoplasm. It localises to the perinuclear region. Its subcellular location is the cytoskeleton. It is found in the microtubule organizing center. The protein resides in the centrosome. The protein localises to the spindle. Functionally, plays a role in neurofilament network integrity. May be involved in modulating axonal architecture during development and in the adult. In vitro, increases the susceptibility of neurofilament-H to calcium-dependent proteases. May also function in modulating the keratin network in skin. Activates the MAPK and Elk-1 signal transduction pathway. In Mus musculus (Mouse), this protein is Gamma-synuclein (Sncg).